The primary structure comprises 357 residues: Protein NDRG2 (357 aa).

Residues 1–14 (MAELREVQITEEKP) show a composition bias toward basic and acidic residues. The interval 1 to 26 (MAELREVQITEEKPLLPGQTPEVAKT) is disordered. Ala2 carries the post-translational modification N-acetylalanine. Thr20 is modified (phosphothreonine). Phosphoserine is present on residues Ser312 and Ser314. Phosphothreonine is present on Thr316. Ser318 is modified (phosphoserine). Thr320 is subject to Phosphothreonine. The disordered stretch occupies residues 320–357 (TSAASIDGNRSRSRTLSQSSESGTLSSGPPGHTMEVSC). Phosphoserine is present on residues Ser321, Ser324, and Ser330. A compositionally biased stretch (low complexity) spans 333 to 347 (RTLSQSSESGTLSSG). At Thr334 the chain carries Phosphothreonine. Ser336, Ser338, Ser339, and Ser341 each carry phosphoserine. Thr343 is modified (phosphothreonine). A Phosphoserine modification is found at Ser356.

It belongs to the NDRG family. As to quaternary structure, interacts with CTNNB1.

It is found in the cytoplasm. The protein localises to the perinuclear region. Its subcellular location is the cell projection. The protein resides in the growth cone. Its function is as follows. Contributes to the regulation of the Wnt signaling pathway. Down-regulates CTNNB1-mediated transcriptional activation of target genes, such as CCND1, and may thereby act as tumor suppressor. May be involved in dendritic cell and neuron differentiation. The sequence is that of Protein NDRG2 (NDRG2) from Bos taurus (Bovine).